The chain runs to 354 residues: Peptide chain release factor 1 (354 aa).

Gln231 bears the N5-methylglutamine mark. A compositionally biased stretch (basic and acidic residues) spans 284 to 304 (EALAKDRKEQVGSGDRSERIR). Positions 284–308 (EALAKDRKEQVGSGDRSERIRTYNF) are disordered.

This sequence belongs to the prokaryotic/mitochondrial release factor family. In terms of processing, methylated by PrmC. Methylation increases the termination efficiency of RF1.

It localises to the cytoplasm. Peptide chain release factor 1 directs the termination of translation in response to the peptide chain termination codons UAG and UAA. The protein is Peptide chain release factor 1 of Nitratiruptor sp. (strain SB155-2).